A 397-amino-acid polypeptide reads, in one-letter code: 2-acyl-1-lysophosphatidylinositol acyltransferase (397 aa).

The short motif at 112-117 (HQIYTD) is the HXXXXD motif element.

The protein belongs to the 1-acyl-sn-glycerol-3-phosphate acyltransferase family.

Its subcellular location is the lipid droplet. It carries out the reaction 1-heptadecanoyl-sn-glycero-3-phosphate + octadecanoyl-CoA = 1-heptadecanoyl-2-octadecanoyl-sn-glycero-3-phosphate + CoA. It catalyses the reaction 1-heptadecanoyl-sn-glycero-3-phosphate + tetradecanoyl-CoA = 1-heptadecanoyl-2-tetradecanoyl-sn-glycero-3-phosphate + CoA. The enzyme catalyses 1-heptadecanoyl-sn-glycero-3-phosphate + hexadecanoyl-CoA = 1-heptadecanoyl-2-hexadecanoyl-sn-glycero-3-phosphate + CoA. Acyltransferase with lysophosphatidic acid acyltransferase (LPAAT) activity. Fatty acyl substrates include 18:0-acyl-CoA, 16:0-acyl-CoA, 17:0-acyl-CoA and 14:0-acyl-CoA. Responsible for the acyl-CoA-dependent introduction of saturated very long chain fatty acids (VLCFAs) into phosphatidylinositol, transferring saturated FAs with 18 to 26 carbon atoms. Responsible for the incorporation of stearate into phosphatidylinositol. Overexpression has an effect on chromosome stability. Regulates phosphorylation and expression of glycerol-3-phosphate acyltransferase SCT1. This chain is 2-acyl-1-lysophosphatidylinositol acyltransferase, found in Saccharomyces cerevisiae (strain ATCC 204508 / S288c) (Baker's yeast).